The following is a 456-amino-acid chain: Cytochrome c biogenesis protein CcsB (456 aa).

The next 3 membrane-spanning stretches (helical) occupy residues 29-49, 88-108, and 174-194; these read LRLAILLLLAIAIASATGTVI, AGWFLGLLILFGASLTACTFR, and VGPILVHAGMLVVLGGAIWGS.

It belongs to the Ccs1/CcsB family. In terms of assembly, may interact with CcsA.

Its subcellular location is the cellular thylakoid membrane. Its function is as follows. Required during biogenesis of c-type cytochromes (cytochrome c6 and cytochrome f) at the step of heme attachment. In Synechococcus sp. (strain ATCC 27144 / PCC 6301 / SAUG 1402/1) (Anacystis nidulans), this protein is Cytochrome c biogenesis protein CcsB.